The sequence spans 349 residues: Flagellar P-ring protein (349 aa).

The first 16 residues, 1–16 (MKYFFIIALLLSSLYS), serve as a signal peptide directing secretion.

Belongs to the FlgI family. In terms of assembly, the basal body constitutes a major portion of the flagellar organelle and consists of four rings (L,P,S, and M) mounted on a central rod.

The protein resides in the periplasm. Its subcellular location is the bacterial flagellum basal body. Its function is as follows. Assembles around the rod to form the L-ring and probably protects the motor/basal body from shearing forces during rotation. This Aliarcobacter butzleri (strain RM4018) (Arcobacter butzleri) protein is Flagellar P-ring protein.